The following is a 331-amino-acid chain: Putative peptidyl-prolyl cis-trans isomerase RF_0616 (331 aa).

Positions 28–50 are disordered; that stretch reads NPTTIEQTASNNSSTDENQTSIN. A PPIase FKBP-type domain is found at 128-226; the sequence is GHVVTVFYQI…NNEVKIYDDE (99 aa).

It carries out the reaction [protein]-peptidylproline (omega=180) = [protein]-peptidylproline (omega=0). The chain is Putative peptidyl-prolyl cis-trans isomerase RF_0616 from Rickettsia felis (strain ATCC VR-1525 / URRWXCal2) (Rickettsia azadi).